Consider the following 892-residue polypeptide: Translation initiation factor IF-2 (892 aa).

Disordered regions lie at residues 32–102 and 114–300; these read LAQA…PGDA and KAPE…KQAE. Residues 35–48 show a composition bias toward polar residues; the sequence is AGSSDTKNSPASKA. Basic and acidic residues predominate over residues 139-166; the sequence is QEEKKESSEETSPERVEETLIIRTRTEP. Residues 200–211 are compositionally biased toward low complexity; the sequence is AASTEETTQQQP. The segment covering 212–224 has biased composition (polar residues); it reads RQNDAASYNNKQQ. A compositionally biased stretch (low complexity) spans 225–238; sequence PSGTSSRPASSAPS. Over residues 252-276 the composition is skewed to basic and acidic residues; it reads RGSERDRSKRSDESVKAFTGRDRYG. A tr-type G domain is found at 397 to 566; the sequence is IRSPIVAFMG…ALQAEVLELK (170 aa). The interval 406–413 is G1; that stretch reads GHVDHGKT. Residue 406–413 coordinates GTP; that stretch reads GHVDHGKT. A G2 region spans residues 431–435; sequence AITQH. Residues 452–455 form a G3 region; sequence DTPG. GTP is bound by residues 452–456 and 506–509; these read DTPGH and NKCD. Residues 506 to 509 are G4; sequence NKCD. Positions 542-544 are G5; it reads SAK.

It belongs to the TRAFAC class translation factor GTPase superfamily. Classic translation factor GTPase family. IF-2 subfamily.

Its subcellular location is the cytoplasm. One of the essential components for the initiation of protein synthesis. Protects formylmethionyl-tRNA from spontaneous hydrolysis and promotes its binding to the 30S ribosomal subunits. Also involved in the hydrolysis of GTP during the formation of the 70S ribosomal complex. This is Translation initiation factor IF-2 from Chlamydia trachomatis serovar A (strain ATCC VR-571B / DSM 19440 / HAR-13).